The primary structure comprises 417 residues: Serine hydroxymethyltransferase (417 aa).

(6S)-5,6,7,8-tetrahydrofolate is bound by residues Leu121 and Gly125–Leu127. Lys229 is modified (N6-(pyridoxal phosphate)lysine). Ser355–Phe357 contacts (6S)-5,6,7,8-tetrahydrofolate.

Belongs to the SHMT family. As to quaternary structure, homodimer. Pyridoxal 5'-phosphate serves as cofactor.

Its subcellular location is the cytoplasm. It carries out the reaction (6R)-5,10-methylene-5,6,7,8-tetrahydrofolate + glycine + H2O = (6S)-5,6,7,8-tetrahydrofolate + L-serine. It functions in the pathway one-carbon metabolism; tetrahydrofolate interconversion. Its pathway is amino-acid biosynthesis; glycine biosynthesis; glycine from L-serine: step 1/1. In terms of biological role, catalyzes the reversible interconversion of serine and glycine with tetrahydrofolate (THF) serving as the one-carbon carrier. This reaction serves as the major source of one-carbon groups required for the biosynthesis of purines, thymidylate, methionine, and other important biomolecules. Also exhibits THF-independent aldolase activity toward beta-hydroxyamino acids, producing glycine and aldehydes, via a retro-aldol mechanism. In Stenotrophomonas maltophilia (strain K279a), this protein is Serine hydroxymethyltransferase.